The chain runs to 505 residues: RNA-splicing ligase RtcB homolog (505 aa).

Positions 119, 122, 227, and 259 each coordinate Mn(2+). 226–230 (NHYAE) is a GMP binding site. The residue at position 300 (Ser-300) is a Phosphoserine. Residue His-353 coordinates Mn(2+). GMP contacts are provided by residues 353-354 (HN), 402-405 (GGTM), Ser-409, and 428-431 (HGAG). His-428 acts as the GMP-histidine intermediate in catalysis. Residue Lys-496 forms a Glycyl lysine isopeptide (Lys-Gly) (interchain with G-Cter in SUMO2) linkage. A GMP-binding site is contributed by Lys-504.

This sequence belongs to the RtcB family. As to quaternary structure, catalytic component of the tRNA-splicing ligase complex. Requires Mn(2+) as cofactor.

It localises to the nucleus. The protein localises to the cytoplasm. It catalyses the reaction a 3'-end 3'-phospho-ribonucleotide-RNA + a 5'-end dephospho-ribonucleoside-RNA + GTP = a ribonucleotidyl-ribonucleotide-RNA + GMP + diphosphate. The catalysed reaction is a 3'-end 2',3'-cyclophospho-ribonucleotide-RNA + a 5'-end dephospho-ribonucleoside-RNA + GTP + H2O = a ribonucleotidyl-ribonucleotide-RNA + GMP + diphosphate + H(+). Functionally, catalytic subunit of the tRNA-splicing ligase complex that acts by directly joining spliced tRNA halves to mature-sized tRNAs by incorporating the precursor-derived splice junction phosphate into the mature tRNA as a canonical 3',5'-phosphodiester. May act as an RNA ligase with broad substrate specificity, and may function toward other RNAs. This Sus scrofa (Pig) protein is RNA-splicing ligase RtcB homolog.